A 103-amino-acid polypeptide reads, in one-letter code: Large ribosomal subunit protein bL21 (103 aa).

It belongs to the bacterial ribosomal protein bL21 family. Part of the 50S ribosomal subunit. Contacts protein L20.

In terms of biological role, this protein binds to 23S rRNA in the presence of protein L20. The polypeptide is Large ribosomal subunit protein bL21 (Yersinia enterocolitica serotype O:8 / biotype 1B (strain NCTC 13174 / 8081)).